A 106-amino-acid chain; its full sequence is uncharacterized protein (106 aa).

Residues 38-106 (KGNKKSKAAT…STHLPYHGSY (69 aa)) are disordered. Basic and acidic residues-rich tracts occupy residues 57-71 (TRQERDLTDRKHRPE) and 82-96 (WKKEVTTRSRPKETS).

The protein localises to the mitochondrion. This is an uncharacterized protein from Arabidopsis thaliana (Mouse-ear cress).